Consider the following 528-residue polypeptide: Intestinal-type alkaline phosphatase (528 aa).

The signal sequence occupies residues 1-19 (MQGPWVLLLLGLRLQLSLG). Aspartate 61 serves as a coordination point for Mg(2+). Residues aspartate 61 and serine 111 each contribute to the Zn(2+) site. Serine 111 functions as the Phosphoserine intermediate in the catalytic mechanism. Cysteine 140 and cysteine 202 are oxidised to a cystine. Asparagine 141 carries an N-linked (GlcNAc...) asparagine glycan. Serine 174 contacts Mg(2+). Ca(2+) is bound at residue glutamate 235. N-linked (GlcNAc...) asparagine glycosylation occurs at asparagine 268. Ca(2+)-binding residues include phenylalanine 288, glutamate 289, and aspartate 304. Glutamate 330 contributes to the Mg(2+) binding site. Residues aspartate 335, histidine 339, aspartate 376, and histidine 377 each contribute to the Zn(2+) site. Asparagine 429 carries an N-linked (GlcNAc...) asparagine glycan. Residue histidine 451 participates in Zn(2+) binding. A disulfide bond links cysteine 486 and cysteine 493. Residue aspartate 503 is the site of GPI-anchor amidated aspartate attachment. The propeptide at 504–528 (AAHPVAASLPLLAGTLLLLGASAAP) is removed in mature form.

The protein belongs to the alkaline phosphatase family. Homodimer. Requires Mg(2+) as cofactor. The cofactor is Zn(2+). Ca(2+) serves as cofactor.

The protein resides in the cell membrane. It carries out the reaction a phosphate monoester + H2O = an alcohol + phosphate. Functionally, alkaline phosphatase that can hydrolyze various phosphate compounds. The polypeptide is Intestinal-type alkaline phosphatase (ALPI) (Homo sapiens (Human)).